We begin with the raw amino-acid sequence, 557 residues long: 2-succinyl-5-enolpyruvyl-6-hydroxy-3-cyclohexene-1-carboxylate synthase (557 aa).

Belongs to the TPP enzyme family. MenD subfamily. Homodimer. It depends on Mg(2+) as a cofactor. Mn(2+) is required as a cofactor. The cofactor is thiamine diphosphate.

It carries out the reaction isochorismate + 2-oxoglutarate + H(+) = 5-enolpyruvoyl-6-hydroxy-2-succinyl-cyclohex-3-ene-1-carboxylate + CO2. The protein operates within quinol/quinone metabolism; 1,4-dihydroxy-2-naphthoate biosynthesis; 1,4-dihydroxy-2-naphthoate from chorismate: step 2/7. It participates in quinol/quinone metabolism; menaquinone biosynthesis. In terms of biological role, catalyzes the thiamine diphosphate-dependent decarboxylation of 2-oxoglutarate and the subsequent addition of the resulting succinic semialdehyde-thiamine pyrophosphate anion to isochorismate to yield 2-succinyl-5-enolpyruvyl-6-hydroxy-3-cyclohexene-1-carboxylate (SEPHCHC). In Yersinia enterocolitica serotype O:8 / biotype 1B (strain NCTC 13174 / 8081), this protein is 2-succinyl-5-enolpyruvyl-6-hydroxy-3-cyclohexene-1-carboxylate synthase.